The sequence spans 116 residues: RNA guanine-N7 methyltransferase activating subunit (116 aa).

The segment at 1–55 is interaction with RNMT; sequence MAEALGAQELYEKMFEQRFTANDKEYQEYLKREQDQPPIVEDWKMGNQRNTDRYR. The segment at 31–116 is disordered; the sequence is KREQDQPPIV…SNQRFHSDRY (86 aa). Residues 36 to 42 carry the RNMT-activating domain motif; sequence QPPIVED. Positions 56 to 116 are RNA-binding; that stretch reads DNRHHRGWDG…SNQRFHSDRY (61 aa). Over residues 67–78 the composition is skewed to low complexity; that stretch reads QNWSSNSYNQSY. Over residues 97-110 the composition is skewed to polar residues; it reads YQQGHYTHNPSNQR.

Belongs to the RAM family.

Its subcellular location is the nucleus. Regulatory subunit of the mRNA-capping methyltransferase RNMT:RAMAC complex that methylates the N7 position of the added guanosine to the 5'-cap structure of mRNAs. Promotes the recruitment of the methyl donor, S-adenosyl-L-methionine, to RNMT. Regulates RNMT expression by a post-transcriptional stabilizing mechanism. Binds RNA. The sequence is that of RNA guanine-N7 methyltransferase activating subunit (ramac) from Xenopus tropicalis (Western clawed frog).